The primary structure comprises 100 residues: Urease subunit gamma (100 aa).

The protein belongs to the urease gamma subunit family. Heterotrimer of UreA (gamma), UreB (beta) and UreC (alpha) subunits. Three heterotrimers associate to form the active enzyme.

It is found in the cytoplasm. It carries out the reaction urea + 2 H2O + H(+) = hydrogencarbonate + 2 NH4(+). It participates in nitrogen metabolism; urea degradation; CO(2) and NH(3) from urea (urease route): step 1/1. This chain is Urease subunit gamma, found in Yersinia bercovieri.